A 49-amino-acid chain; its full sequence is uncharacterized protein (49 aa).

A helical membrane pass occupies residues isoleucine 6–phenylalanine 28.

Its subcellular location is the membrane. This is an uncharacterized protein from Saccharomyces cerevisiae (strain ATCC 204508 / S288c) (Baker's yeast).